Consider the following 251-residue polypeptide: Meso-2,3-butanediol dehydrogenase (251 aa).

NAD(+)-binding residues include asparagine 15, methionine 17, aspartate 36, aspartate 60, valine 61, and asparagine 87. (R)-acetoin is bound by residues serine 138, serine 140, and tyrosine 151. (S)-acetoin is bound at residue serine 138. 4 residues coordinate NAD(+): tyrosine 151, lysine 155, valine 184, and threonine 186. A (S)-acetoin-binding site is contributed by tyrosine 151. Residue tyrosine 151 is the Proton acceptor of the active site.

It belongs to the short-chain dehydrogenases/reductases (SDR) family. Homotetramer; dimer of dimers.

It carries out the reaction (R,S)-butane-2,3-diol + NAD(+) = (R)-acetoin + NADH + H(+). It catalyses the reaction (S,S)-butane-2,3-diol + NAD(+) = (S)-acetoin + NADH + H(+). The enzyme catalyses (S)-acetoin + NAD(+) = diacetyl + NADH + H(+). With respect to regulation, oxidation of meso-2,3-butanediol is enhanced in the presence of Fe(2+). Reduction of diacetyl and (3S/3R)-acetoin is slightly enhanced in the presence of Mg(2+) and Mn(2+). Activity is inhibited by several metal ions, particularly Fe(3+) for reduction of diacetyl and acetoin. In terms of biological role, catalyzes the NAD-dependent oxidation of meso-2,3-butanediol to (3R)-acetoin, and of (2S,3S)-2,3-butanediol to (3S)-acetoin, with much lower efficiency. Can also oxidize several primary alcohols such as glycerol, 1-2-pentanediol and 1,2-propanediol, with lower activity. Cannot use (2R,3R)-2,3-butanediol. In the presence of NADH, catalyzes the reduction of (3R)-acetoin to meso-2,3-butanediol, of (3S)-acetoin to (2S,3S)-2,3-butanediol and of diacetyl to (3S)-acetoin. No activity is detected with NADPH/NADP(+). The chain is Meso-2,3-butanediol dehydrogenase from Serratia marcescens.